Consider the following 41-residue polypeptide: Large ribosomal subunit protein bL36 (41 aa).

This sequence belongs to the bacterial ribosomal protein bL36 family.

This Bradyrhizobium diazoefficiens (strain JCM 10833 / BCRC 13528 / IAM 13628 / NBRC 14792 / USDA 110) protein is Large ribosomal subunit protein bL36.